The following is a 417-amino-acid chain: Aromatic-amino-acid aminotransferase 1 (417 aa).

N6-(pyridoxal phosphate)lysine is present on Lys258.

This sequence belongs to the class-I pyridoxal-phosphate-dependent aminotransferase family. As to quaternary structure, homodimer. It depends on pyridoxal 5'-phosphate as a cofactor.

It catalyses the reaction an aromatic L-alpha-amino acid + 2-oxoglutarate = an aromatic oxo-acid + L-glutamate. In terms of biological role, catalyzes the transamination of phenylalanine, tyrosine and tryptophan. Shows virtually no activity towards aspartic acid, alanine, valine or isoleucine. This is Aromatic-amino-acid aminotransferase 1 from Thermococcus litoralis (strain ATCC 51850 / DSM 5473 / JCM 8560 / NS-C).